We begin with the raw amino-acid sequence, 512 residues long: Serine--tRNA ligase, cytoplasmic (512 aa).

At M1 the chain carries N-acetylmethionine. The segment at 9–61 (RVDKGGDPALIRETQEKRFKDPGLVDQLVKADSEWRRCRFRADNLNKLKNLCS) is interaction with tRNA. At S241 the chain carries Phosphoserine. L-serine contacts are provided by T271 and R302. Residues 302-304 (RQE) and 318-321 (VHQF) contribute to the ATP site. Position 323 is an N6-acetyllysine (K323). Position 325 (E325) interacts with L-serine. Residue 391–394 (ELVS) coordinates ATP. N427 is an L-serine binding site. Positions 470-512 (FVKPAPIDQEPSKKQKKQHEGSKKKAKEVPLENQLQSMEVTEA) are disordered. Positions 479–499 (EPSKKQKKQHEGSKKKAKEVP) are enriched in basic and acidic residues. Residues 482 to 494 (KKQKKQHEGSKKK) carry the Nuclear localization signal motif. Residues 502 to 512 (NQLQSMEVTEA) show a composition bias toward polar residues. Phosphoserine is present on S506.

Belongs to the class-II aminoacyl-tRNA synthetase family. Type-1 seryl-tRNA synthetase subfamily. Homodimer. The tRNA molecule may bind across the dimer. Interacts with SIRT2. Interacts with METTL6; interaction is required for the tRNA N(3)-methylcytidine methyltransferase activity of METTL6.

Its subcellular location is the cytoplasm. The protein localises to the nucleus. It carries out the reaction tRNA(Ser) + L-serine + ATP = L-seryl-tRNA(Ser) + AMP + diphosphate + H(+). The enzyme catalyses tRNA(Sec) + L-serine + ATP = L-seryl-tRNA(Sec) + AMP + diphosphate + H(+). Its pathway is aminoacyl-tRNA biosynthesis; selenocysteinyl-tRNA(Sec) biosynthesis; L-seryl-tRNA(Sec) from L-serine and tRNA(Sec): step 1/1. Functionally, catalyzes the attachment of serine to tRNA(Ser) in a two-step reaction: serine is first activated by ATP to form Ser-AMP and then transferred to the acceptor end of tRNA(Ser). Is probably also able to aminoacylate tRNA(Sec) with serine, to form the misacylated tRNA L-seryl-tRNA(Sec), which will be further converted into selenocysteinyl-tRNA(Sec). In the nucleus, binds to the VEGFA core promoter and prevents MYC binding and transcriptional activation by MYC. Recruits SIRT2 to the VEGFA promoter, promoting deacetylation of histone H4 at 'Lys-16' (H4K16). Thereby, inhibits the production of VEGFA and sprouting angiogenesis mediated by VEGFA. The chain is Serine--tRNA ligase, cytoplasmic (Sars1) from Mus musculus (Mouse).